The chain runs to 79 residues: Translational regulator CsrA (79 aa).

This sequence belongs to the CsrA/RsmA family. In terms of assembly, homodimer; the beta-strands of each monomer intercalate to form a hydrophobic core, while the alpha-helices form wings that extend away from the core.

The protein localises to the cytoplasm. A translational regulator that binds mRNA to regulate translation initiation and/or mRNA stability. Usually binds in the 5'-UTR at or near the Shine-Dalgarno sequence preventing ribosome-binding, thus repressing translation. Its main target seems to be the major flagellin gene, while its function is anatagonized by FliW. The protein is Translational regulator CsrA of Leptospira biflexa serovar Patoc (strain Patoc 1 / Ames).